The primary structure comprises 171 residues: Large ribosomal subunit protein uL10 (171 aa).

It belongs to the universal ribosomal protein uL10 family. Part of the ribosomal stalk of the 50S ribosomal subunit. The N-terminus interacts with L11 and the large rRNA to form the base of the stalk. The C-terminus forms an elongated spine to which L12 dimers bind in a sequential fashion forming a multimeric L10(L12)X complex.

Its function is as follows. Forms part of the ribosomal stalk, playing a central role in the interaction of the ribosome with GTP-bound translation factors. The chain is Large ribosomal subunit protein uL10 from Nitrosomonas eutropha (strain DSM 101675 / C91 / Nm57).